The following is a 789-amino-acid chain: Toll-like receptor 6 (789 aa).

A signal peptide spans 1 to 31 (MTKDKEPIVKNFHLVCIVTLIVGTIIQFSDA). Residues 32-587 (DEFAIDMSKT…QLSCSTSLLT (556 aa)) are Extracellular-facing. 19 LRR repeats span residues 54 to 77 (TKVLDMSQNYLSELQISDISFLSG), 78 to 101 (LKILVLSHNRLQLLDLSVFKFNQD), 102 to 122 (LEYLDLSHNQLKKMSCHPFVN), 123 to 147 (LKHLDLSFNDFDSLPICKEFGNLTQ), 148 to 168 (LDFLGLSATKLQQLDLLPIAH), 169 to 196 (LHLNCILLDLKGYYVKQNETESLQILNT), 197 to 219 (KKLHLVFHTGSFFSVQVNMSVNT), 220 to 250 (LGCLEMTNIKLNDKNCYFLMKFLLELTKGPS), 251 to 277 (LLNFTLNHMETTWKCLVRVFQFLWTKP), 278 to 303 (VEYLNIYNLTIVDDINKEYFIYCKTA), 304 to 330 (LKALKIEHITKTVFIFSWSSLYTLFSE), 331 to 354 (MNIMMLSITDTPFIHMLCPKTRST), 355 to 378 (FKFLDFTQNVFTDSIFENCSTLVE), 379 to 404 (LETLILQKNGLKDLFKIGLMTKGMPS), 405 to 428 (LEILDLSWNSLVFNRQRKCIWVGS), 429 to 449 (ILMLNMSSNLLTDLVFRCLPP), 450 to 473 (RVTVLDLHNNRIMSIPKDVTSLET), 474 to 495 (LQELNIAFNSLTDLPGCGTFSS), and 496 to 519 (LSVLIIDYNLISHPSTDFIQSCQN). Cys117 and Cys139 are joined by a disulfide. The N-linked (GlcNAc...) asparagine glycan is linked to Asn144. N-linked (GlcNAc...) asparagine glycosylation is found at Asn186 and Asn214. Cys235 and Cys265 are disulfide-bonded. Residues Asn253 and Asn285 are each glycosylated (N-linked (GlcNAc...) asparagine). A disulfide bridge links Cys348 with Cys373. An N-linked (GlcNAc...) asparagine glycan is attached at Asn372. A disulfide bond links Cys423 and Cys446. Asn433 is a glycosylation site (N-linked (GlcNAc...) asparagine). Asn519 carries N-linked (GlcNAc...) asparagine glycosylation. Residues 520–575 (ITSIKAGKNPFQCTCDLREFIKTISQMSSEVVKDWPDSYKCDYPESYKGTLLQDFH) enclose the LRRCT domain. The chain crosses the membrane as a helical span at residues 588 to 608 (VTIGATMLVLVVTVTFLCIYL). Residues 609-789 (DLPWYIRMVY…INIKLMEEKK (181 aa)) are Cytoplasmic-facing. In terms of domain architecture, TIR spans 639 to 780 (LQFHAFISYS…LFWANLRAAI (142 aa)).

It belongs to the Toll-like receptor family. In terms of assembly, homodimer (via cytoplasmic TIR domain). Heterodimer with TLR2 via their respective extracellular domains. Binds MYD88 via their respective TIR domains. Interacts with CD36, following CD36 stimulation by oxLDL or amyloid-beta 42, and forms a heterodimer with TLR4. The trimeric complex is internalized and triggers inflammatory response. LYN kinase activity facilitates TLR4:TLR6 heterodimerization and signal initiation. The heterodimer TLR2:TLR6 interacts with CD14 and CD36 in response to triacylated lipopeptides.

Its subcellular location is the cell membrane. The protein localises to the cytoplasmic vesicle. It is found in the phagosome membrane. The protein resides in the membrane raft. It localises to the golgi apparatus. Participates in the innate immune response to Gram-positive bacteria and fungi. Specifically recognizes diacylated and, to a lesser extent, triacylated lipopeptides. In response to diacylated lipopeptides, forms the activation cluster TLR2:TLR6:CD14:CD36, this cluster triggers signaling from the cell surface and subsequently is targeted to the Golgi in a lipid-raft dependent pathway. Acts via MYD88 and TRAF6, leading to NF-kappa-B activation, cytokine secretion and the inflammatory response. Recognizes mycoplasmal macrophage-activating lipopeptide-2kD (MALP-2), soluble tuberculosis factor (STF), phenol-soluble modulin (PSM) and B.burgdorferi outer surface protein A lipoprotein (OspA-L) cooperatively with TLR2. In complex with TLR4, promotes sterile inflammation in monocytes/macrophages in response to oxidized low-density lipoprotein (oxLDL) or amyloid-beta 42. In this context, the initial signal is provided by oxLDL- or amyloid-beta 42-binding to CD36. This event induces the formation of a heterodimer of TLR4 and TLR6, which is rapidly internalized and triggers inflammatory response, leading to the NF-kappa-B-dependent production of CXCL1, CXCL2 and CCL9 cytokines, via MYD88 signaling pathway, and CCL5 cytokine, via TICAM1 signaling pathway, as well as IL1B secretion. This is Toll-like receptor 6 (TLR6) from Dasypus novemcinctus (Nine-banded armadillo).